A 462-amino-acid chain; its full sequence is Arginine biosynthesis bifunctional protein ArgJ, mitochondrial (462 aa).

The substrate site is built by T200, K228, T239, E326, N457, and T462. T239 acts as the Nucleophile in catalysis.

It belongs to the ArgJ family. As to quaternary structure, heterodimer of an alpha and a beta chain. The alpha and beta chains are autoproteolytically processed from a single precursor protein within the mitochondrion.

Its subcellular location is the mitochondrion matrix. The enzyme catalyses N(2)-acetyl-L-ornithine + L-glutamate = N-acetyl-L-glutamate + L-ornithine. It catalyses the reaction L-glutamate + acetyl-CoA = N-acetyl-L-glutamate + CoA + H(+). It functions in the pathway amino-acid biosynthesis; L-arginine biosynthesis; L-ornithine and N-acetyl-L-glutamate from L-glutamate and N(2)-acetyl-L-ornithine (cyclic): step 1/1. The protein operates within amino-acid biosynthesis; L-arginine biosynthesis; N(2)-acetyl-L-ornithine from L-glutamate: step 1/4. Its function is as follows. Catalyzes two activities which are involved in the cyclic version of arginine biosynthesis: the synthesis of acetylglutamate from glutamate and acetyl-CoA, and of ornithine by transacetylation between acetylornithine and glutamate. The sequence is that of Arginine biosynthesis bifunctional protein ArgJ, mitochondrial from Pyrenophora tritici-repentis (strain Pt-1C-BFP) (Wheat tan spot fungus).